The chain runs to 265 residues: H-2 class II histocompatibility antigen, A-Q beta chain (265 aa).

An N-terminal signal peptide occupies residues 1–27 (MALQIPSLLLSAAVVVLMVLSSPRTEG). The segment at 28 to 122 (GNSERHFVAQ…VETHTSLRRL (95 aa)) is beta-1. Topologically, residues 28–227 (GNSERHFVAQ…AQSESARSKM (200 aa)) are extracellular. Disulfide bonds link Cys42/Cys106 and Cys145/Cys201. Asn46 is a glycosylation site (N-linked (GlcNAc...) asparagine). Residues 123 to 217 (EQPNVAISLS…LKSPITVEWR (95 aa)) form a beta-2 region. In terms of domain architecture, Ig-like C1-type spans 125–213 (PNVAISLSRT…EHPSLKSPIT (89 aa)). The interval 218–227 (AQSESARSKM) is connecting peptide. The chain crosses the membrane as a helical span at residues 228 to 247 (LSGIGGCVLGVIFLGLGLFI). The Cytoplasmic segment spans residues 248–265 (RHRSQKGPRGPPPAGLLQ).

This sequence belongs to the MHC class II family. In terms of processing, ubiquitinated in immature dendritic cells leading to down-regulation of MHC class II.

The protein resides in the membrane. This chain is H-2 class II histocompatibility antigen, A-Q beta chain (H2-Ab1), found in Mus musculus (Mouse).